The primary structure comprises 703 residues: Harmonin-binding protein USHBP1 (703 aa).

Positions 1 to 15 are enriched in basic residues; that stretch reads MSARATRPRSRRGRH. Disordered stretches follow at residues 1–113 and 138–172; these read MSAR…PPGN and HQPP…CQRE. Residues 189 to 227 are a coiled coil; it reads SREDELVRTQASLEAIRAEKETLQKEVQELQDSLLRLEP. The disordered stretch occupies residues 228–256; that stretch reads CPHLSHNQAGGSGSGSSSSEADREPWETQ. A coiled-coil region spans residues 289–309; that stretch reads EMHIMEAQMEQLRGSIEKLKC. The tract at residues 396 to 416 is disordered; it reads MDAGAQQNPQPSPEGSSVDKP. The segment covering 400 to 410 has biased composition (polar residues); that stretch reads AQQNPQPSPEG. Residues 476–513 adopt a coiled-coil conformation; it reads RLEKTQIQQDLVAAREALADLMLRLQLVRREKRGLELR. Positions 540–583 are disordered; it reads AGGANSSGGHSSGGGSSGDEEEWYQGLPAVPGGTSGIDGGQVGR. Over residues 572–581 the composition is skewed to gly residues; it reads GTSGIDGGQV. Residues 596 to 681 adopt a coiled-coil conformation; the sequence is ASLTRTLDLQ…QAEEVAVLEA (86 aa).

This sequence belongs to the MCC family. As to quaternary structure, interacts via its C-terminus with the first PDZ domain of USH1C. Highest level of expression in heart, and moderate to low expression in skeletal muscle, kidney, liver, small intestine, placenta and lung.

This chain is Harmonin-binding protein USHBP1, found in Homo sapiens (Human).